The chain runs to 156 residues: 3-hydroxyacyl-[acyl-carrier-protein] dehydratase FabZ (156 aa).

His57 is a catalytic residue.

The protein belongs to the thioester dehydratase family. FabZ subfamily.

The protein resides in the cytoplasm. It catalyses the reaction a (3R)-hydroxyacyl-[ACP] = a (2E)-enoyl-[ACP] + H2O. Involved in unsaturated fatty acids biosynthesis. Catalyzes the dehydration of short chain beta-hydroxyacyl-ACPs and long chain saturated and unsaturated beta-hydroxyacyl-ACPs. This is 3-hydroxyacyl-[acyl-carrier-protein] dehydratase FabZ from Anaeromyxobacter dehalogenans (strain 2CP-1 / ATCC BAA-258).